The following is a 632-amino-acid chain: MAU2 chromatid cohesion factor homolog (632 aa).

2 TPR repeats span residues 453-486 (GGFY…ANAE) and 493-526 (SCSL…ASKI).

This sequence belongs to the SCC4/mau-2 family. Interacts with Nipped-B to form the cohesin loading complex.

It is found in the nucleus. The protein localises to the nucleoplasm. In terms of biological role, required for association of the cohesin complex with chromatin during interphase. Plays a role in sister chromatid cohesion and normal progression through prometaphase. This is MAU2 chromatid cohesion factor homolog from Drosophila melanogaster (Fruit fly).